The primary structure comprises 142 residues: Putative pre-16S rRNA nuclease (142 aa).

Belongs to the YqgF nuclease family.

It is found in the cytoplasm. Functionally, could be a nuclease involved in processing of the 5'-end of pre-16S rRNA. The polypeptide is Putative pre-16S rRNA nuclease (Azotobacter vinelandii (strain DJ / ATCC BAA-1303)).